We begin with the raw amino-acid sequence, 667 residues long: High affinity sulfate transporter 1 (667 aa).

The interval 16 to 38 (ETRSNSSSHRHGGGGGGDDTTSL) is disordered. The next 11 helical transmembrane spans lie at 106–126 (GDFIAGLTIASLCIPQDLAYA), 131–151 (LDPWYGLYSSFVAPLVYAFMG), 156–176 (IAIGPVAVVSLLLGTLLSNEI), 185–205 (LRLAFTATFFAGVTQMLLGVC), 208–228 (GFLIDFLSHAAIVGFMAGAAI), 269–289 (WETILIGLSFLIFLLITKYIA), 296–316 (FWVSAISPMISVIVSTFFVYI), 350–370 (GAGVRVGVVAGLVALTEAIAI), 425–445 (VSNIVMSIVVLLTLLVITPLF), 452–472 (VLASIIIAAVVNLVNIEAMVL), and 486–506 (GAFFGVIFKSVEIGLLIAVAI). The STAS domain occupies 537–660 (QYPKAAQIPG…LTVADAVATY (124 aa)).

It belongs to the SLC26A/SulP transporter (TC 2.A.53) family.

The protein resides in the membrane. Its function is as follows. High-affinity H(+)/sulfate cotransporter that mediates the uptake of sulfate by plant roots from low concentrations of sulfate in the soil solution. This chain is High affinity sulfate transporter 1 (ST1), found in Stylosanthes hamata (Caribbean stylo).